An 868-amino-acid chain; its full sequence is Translation initiation factor IF-2 (868 aa).

2 disordered regions span residues 49-72 (LSKQHGSAAEPTRMTLKRKTTSTL) and 92-276 (KRSD…EHLK). Over residues 92 to 240 (KRSDIEEQQR…KKAEAEEVHL (149 aa)) the composition is skewed to basic and acidic residues. Residues 368–537 (SRAPVVTIMG…VLQSELLDLQ (170 aa)) form the tr-type G domain. The G1 stretch occupies residues 377-384 (GHVDHGKT). GTP is bound at residue 377 to 384 (GHVDHGKT). The segment at 402–406 (GITQH) is G2. The G3 stretch occupies residues 423–426 (DTPG). GTP-binding positions include 423-427 (DTPGH) and 477-480 (NKMD). The segment at 477-480 (NKMD) is G4. Residues 513–515 (SAK) are G5.

This sequence belongs to the TRAFAC class translation factor GTPase superfamily. Classic translation factor GTPase family. IF-2 subfamily.

It is found in the cytoplasm. In terms of biological role, one of the essential components for the initiation of protein synthesis. Protects formylmethionyl-tRNA from spontaneous hydrolysis and promotes its binding to the 30S ribosomal subunits. Also involved in the hydrolysis of GTP during the formation of the 70S ribosomal complex. This Alteromonas mediterranea (strain DSM 17117 / CIP 110805 / LMG 28347 / Deep ecotype) protein is Translation initiation factor IF-2.